The sequence spans 556 residues: Oxygen-dependent choline dehydrogenase (556 aa).

An FAD-binding site is contributed by aspartate 6 to glutamate 35. The active-site Proton acceptor is the histidine 475.

The protein belongs to the GMC oxidoreductase family. FAD serves as cofactor.

The enzyme catalyses choline + A = betaine aldehyde + AH2. It carries out the reaction betaine aldehyde + NAD(+) + H2O = glycine betaine + NADH + 2 H(+). It participates in amine and polyamine biosynthesis; betaine biosynthesis via choline pathway; betaine aldehyde from choline (cytochrome c reductase route): step 1/1. Involved in the biosynthesis of the osmoprotectant glycine betaine. Catalyzes the oxidation of choline to betaine aldehyde and betaine aldehyde to glycine betaine at the same rate. The sequence is that of Oxygen-dependent choline dehydrogenase from Xanthomonas axonopodis pv. citri (strain 306).